The primary structure comprises 63 residues: Translational regulator CsrA (63 aa).

The protein belongs to the CsrA/RsmA family. In terms of assembly, homodimer; the beta-strands of each monomer intercalate to form a hydrophobic core, while the alpha-helices form wings that extend away from the core.

It is found in the cytoplasm. In terms of biological role, a key translational regulator that binds mRNA to regulate translation initiation and/or mRNA stability. Mediates global changes in gene expression, shifting from rapid growth to stress survival by linking envelope stress, the stringent response and the catabolite repression systems. Usually binds in the 5'-UTR; binding at or near the Shine-Dalgarno sequence prevents ribosome-binding, repressing translation, binding elsewhere in the 5'-UTR can activate translation and/or stabilize the mRNA. Its function is antagonized by small RNA(s). This is Translational regulator CsrA from Alteromonas mediterranea (strain DSM 17117 / CIP 110805 / LMG 28347 / Deep ecotype).